Consider the following 75-residue polypeptide: Parvalbumin beta 3 (75 aa).

Ala1 bears the N-acetylalanine mark. Residues 26–61 (YKAFFAKKAFFVIDQDKSGFIEEDELKLFLQVFSAG) enclose the EF-hand domain. Ca(2+) contacts are provided by Asp39, Asp41, Ser43, Phe45, Glu47, and Glu50.

Belongs to the parvalbumin family.

In muscle, parvalbumin is thought to be involved in relaxation after contraction. It binds two calcium ions. The protein is Parvalbumin beta 3 of Merluccius gayi (South Pacific hake).